The primary structure comprises 396 residues: Beta-1,3-N-acetylglucosaminyltransferase radical fringe (396 aa).

Topologically, residues 1-6 (MNFSCL) are cytoplasmic. The helical; Signal-anchor for type II membrane protein transmembrane segment at 7 to 27 (GLSKICFLVSVIFCTFLLLFI) threads the bilayer. At 28-396 (PKTKTPWRPR…THWCPPRKTR (369 aa)) the chain is on the lumenal side. Residues Asn-49 and Asn-120 are each glycosylated (N-linked (GlcNAc...) asparagine). Residue Arg-145 participates in substrate binding. N-linked (GlcNAc...) asparagine glycosylation occurs at Asn-184. 2 disulfides stabilise this stretch: Cys-185/Cys-196 and Cys-214/Cys-277. Residue Asp-218 participates in substrate binding. Asp-219 provides a ligand contact to Mn(2+). Asp-307 is a catalytic residue. His-331 lines the Mn(2+) pocket. Cys-381 and Cys-390 form a disulfide bridge.

The protein belongs to the glycosyltransferase 31 family. It depends on Mn(2+) as a cofactor. In terms of tissue distribution, detected in the mesanchymal region of the developing limb. Expressed in mesoderm but not in ectoderm with no evident boundary of expression.

Its subcellular location is the golgi apparatus membrane. The enzyme catalyses 3-O-(alpha-L-fucosyl)-L-threonyl-[EGF-like domain protein] + UDP-N-acetyl-alpha-D-glucosamine = 3-O-(N-acetyl-beta-D-glucosaminyl-(1-&gt;3)-alpha-L-fucosyl)-L-threonyl-[EGF-like domain protein] + UDP + H(+). It catalyses the reaction 3-O-(alpha-L-fucosyl)-L-seryl-[EGF-like domain protein] + UDP-N-acetyl-alpha-D-glucosamine = 3-O-(N-acetyl-beta-D-glucosaminyl-(1-&gt;3)-alpha-L-fucosyl)-L-seryl-[EGF-like domain protein] + UDP + H(+). In terms of biological role, glycosyltransferase that initiates the elongation of O-linked fucose residues attached to EGF-like repeats in the extracellular domain of Notch molecules. Involved in forelimb development and in adult forelimb regeneration. The sequence is that of Beta-1,3-N-acetylglucosaminyltransferase radical fringe (RFNG) from Notophthalmus viridescens (Eastern newt).